The primary structure comprises 424 residues: Hydrolase ORFZ (424 aa).

Serine 243 acts as the Nucleophile in catalysis.

It belongs to the AB hydrolase superfamily. FUS2 hydrolase family. As to quaternary structure, homodimer.

It functions in the pathway secondary metabolite biosynthesis. Hydrolyase; part of the gene cluster that mediates the biosynthesis of a tyrosine-derived cytochalasan acting as a fungal signal recognized by resistant rice plants and leads to avirulence in Pi33 resistant rice cultivars. The first step in the pathway is catalyzed by the hybrid PKS-NRPS ACE1, assisted by the enoyl reductase RAP1, that are responsible for fusion of the tyrosine precursor and the polyketide backbone. The polyketide synthase module (PKS) of ACE1 is responsible for the synthesis of the polyketide backbone and the downstream nonribosomal peptide synthetase (NRPS) amidates the carboxyl end of the polyketide with the tyrosine precursor. Because ACE1 lacks a designated enoylreductase (ER) domain, the required activity is provided the enoyl reductase RAP1. Reduction by the hydrolyase ORFZ, followed by dehydration and intra-molecular Diels-Alder cyclization by the Diels-Alderase ORF3 then yield the required isoindolone-fused macrocycle. A number of oxidative steps catalyzed by the tailoring enzymes identified within the cluster, including cytochrome P450 monooxygenases CYP1 to CYP4, the FAD-linked oxidoreductase OXR2 and the short-chain dehydrogenase/reductase OXR1, are further required to afford the final cytochalasans that confer avirulence and which have still to be identified. The monooxygenase CYP1 has been shown to be a site-selective C-18 hydroxylase whereas the function of CYP3 is the site-selective epoxidation of the C-6/C-7 olefin that is present in some intermediate compounds. Finally, SYN2 and RAP2 are not required for avirulence in Pi33 resistant rice cultivars. The chain is Hydrolase ORFZ from Pyricularia oryzae (strain 70-15 / ATCC MYA-4617 / FGSC 8958) (Rice blast fungus).